A 124-amino-acid chain; its full sequence is Large ribosomal subunit protein bL12 (124 aa).

It belongs to the bacterial ribosomal protein bL12 family. As to quaternary structure, homodimer. Part of the ribosomal stalk of the 50S ribosomal subunit. Forms a multimeric L10(L12)X complex, where L10 forms an elongated spine to which 2 to 4 L12 dimers bind in a sequential fashion. Binds GTP-bound translation factors.

In terms of biological role, forms part of the ribosomal stalk which helps the ribosome interact with GTP-bound translation factors. Is thus essential for accurate translation. The sequence is that of Large ribosomal subunit protein bL12 from Pelodictyon phaeoclathratiforme (strain DSM 5477 / BU-1).